The sequence spans 412 residues: L-cysteine:1D-myo-inositol 2-amino-2-deoxy-alpha-D-glucopyranoside ligase (412 aa).

Position 43 (C43) interacts with Zn(2+). L-cysteinyl-5'-AMP contacts are provided by residues 43–46 (CGIT), T58, and 81–83 (NVT). A 'HIGH' region motif is present at residues 45 to 55 (ITPYDATHLGH). Residues 186-191 (ERGGDP) carry the 'ERGGDP' region motif. Residue W227 coordinates L-cysteinyl-5'-AMP. C231 lines the Zn(2+) pocket. 249-251 (GND) lines the L-cysteinyl-5'-AMP pocket. Residue H256 coordinates Zn(2+). I283 provides a ligand contact to L-cysteinyl-5'-AMP. The short motif at 289 to 293 (KMSKS) is the 'KMSKS' region element.

It belongs to the class-I aminoacyl-tRNA synthetase family. MshC subfamily. Monomer. Zn(2+) serves as cofactor.

It carries out the reaction 1D-myo-inositol 2-amino-2-deoxy-alpha-D-glucopyranoside + L-cysteine + ATP = 1D-myo-inositol 2-(L-cysteinylamino)-2-deoxy-alpha-D-glucopyranoside + AMP + diphosphate + H(+). Its function is as follows. Catalyzes the ATP-dependent condensation of GlcN-Ins and L-cysteine to form L-Cys-GlcN-Ins. This chain is L-cysteine:1D-myo-inositol 2-amino-2-deoxy-alpha-D-glucopyranoside ligase, found in Salinispora arenicola (strain CNS-205).